The chain runs to 509 residues: Maturase K (509 aa).

The protein belongs to the intron maturase 2 family. MatK subfamily.

The protein resides in the plastid. Its subcellular location is the chloroplast. Usually encoded in the trnK tRNA gene intron. Probably assists in splicing its own and other chloroplast group II introns. In Chamaecyparis obtusa (Hinoki false-cypress), this protein is Maturase K.